A 174-amino-acid chain; its full sequence is Shikimate kinase 2 (174 aa).

12–17 (GCGKTT) provides a ligand contact to ATP. The Mg(2+) site is built by Thr16 and Asp32. The substrate site is built by Asp34, Arg58, and Gly79. The LID domain stretch occupies residues 112 to 126 (QAAPEEDLRPTLTGK). Position 120 (Arg120) interacts with ATP. Arg139 is a substrate binding site.

It belongs to the shikimate kinase family. AroL subfamily. As to quaternary structure, monomer. Mg(2+) serves as cofactor.

The protein resides in the cytoplasm. It carries out the reaction shikimate + ATP = 3-phosphoshikimate + ADP + H(+). It functions in the pathway metabolic intermediate biosynthesis; chorismate biosynthesis; chorismate from D-erythrose 4-phosphate and phosphoenolpyruvate: step 5/7. Catalyzes the specific phosphorylation of the 3-hydroxyl group of shikimic acid using ATP as a cosubstrate. This is Shikimate kinase 2 from Shigella boydii serotype 4 (strain Sb227).